A 417-amino-acid polypeptide reads, in one-letter code: Spermidine/putrescine import ATP-binding protein PotA (417 aa).

Positions 5-308 (IILKDLTKVF…PANRFVAQFV (304 aa)) constitute an ABC transporter domain. 37 to 44 (GPSGCGKT) contributes to the ATP binding site. Residues 105–177 (DFNSKIKDNL…TALKCKKINK (73 aa)) form an insert region.

Belongs to the ABC transporter superfamily. Spermidine/putrescine importer (TC 3.A.1.11.1) family. As to quaternary structure, the complex is composed of two ATP-binding proteins (PotA), two transmembrane proteins (PotB and PotC) and a solute-binding protein (PotD).

The protein localises to the cell membrane. The enzyme catalyses ATP + H2O + polyamine-[polyamine-binding protein]Side 1 = ADP + phosphate + polyamineSide 2 + [polyamine-binding protein]Side 1.. Its function is as follows. Part of the ABC transporter complex PotABCD involved in spermidine/putrescine import. Responsible for energy coupling to the transport system. The sequence is that of Spermidine/putrescine import ATP-binding protein PotA from Aster yellows witches'-broom phytoplasma (strain AYWB).